Consider the following 790-residue polypeptide: Chorion peroxidase (790 aa).

The N-terminal stretch at 1-16 (MAKKVLLLSLYSAVLS) is a signal peptide. Residues 17–209 (TWFGFGYVQC…ARIPRAIRKR (193 aa)) constitute a propeptide that is removed on maturation. An N-acetylcysteine; in Chorion peroxidase light chain modification is found at Cys210. A disulfide bridge links Cys216 with Cys229. A glycan (N-linked (Man) tryptophan) is linked at Trp259. The active-site Proton acceptor is the His305. Asn327 carries N-linked (GlcNAc...) asparagine glycosylation. Tyr353 is modified (3',4'-dihydroxyphenylalanine). A disulfide bridge connects residues Cys433 and Cys440. N-linked (Man) tryptophan glycosylation occurs at Trp479. His551 provides a ligand contact to heme b. Trp680 carries N-linked (Man) tryptophan glycosylation. The cysteines at positions 746 and 774 are disulfide-linked. An N-linked (Man) tryptophan glycan is attached at Trp785.

Belongs to the peroxidase family. XPO subfamily. Heterodimer. Requires heme b as cofactor. In terms of processing, N-glycosylated on Trp by mannose and on Asn by N-acetylglucosamine. There is a hexose glycosylation of an unidentified residue between 654 and 708; Trp-680 is conserved in closely related species and is probably mannosylated.

The protein resides in the secreted. It catalyses the reaction 2 a phenolic donor + H2O2 = 2 a phenolic radical donor + 2 H2O. Its activity is regulated as follows. Extremely resistant to denaturating agents, such as SDS and organic solvents. Functionally, involved in the formation of a rigid and insoluble egg chorion by catalyzing chorion protein cross-linking through dityrosine formation and phenol oxidase-catalyzed chorion melanization. This Aedes aegypti (Yellowfever mosquito) protein is Chorion peroxidase (pxt).